Reading from the N-terminus, the 506-residue chain is Maturase K (506 aa).

It belongs to the intron maturase 2 family. MatK subfamily.

Its subcellular location is the plastid. The protein resides in the chloroplast. Functionally, usually encoded in the trnK tRNA gene intron. Probably assists in splicing its own and other chloroplast group II introns. This chain is Maturase K, found in Hydrangea macrophylla (Bigleaf hydrangea).